Here is a 309-residue protein sequence, read N- to C-terminus: Uracil phosphoribosyltransferase homolog (309 aa).

The segment at 1 to 41 is disordered; it reads MATELQCPDSMPCHNQQVNSASTPSPEQLRPGDPILDHAGG. A compositionally biased stretch (polar residues) spans 13–26; sequence CHNQQVNSASTPSP. At S25 the chain carries Phosphoserine. GTP contacts are provided by residues R133, R142, and 176-179; that span reads EKGN. R186 contacts 5-phospho-alpha-D-ribose 1-diphosphate. Residues R203 and R232 each coordinate GTP. 238-246 contacts 5-phospho-alpha-D-ribose 1-diphosphate; that stretch reads YPILSTGNT. 299–301 serves as a coordination point for uracil; that stretch reads THF.

This sequence belongs to the UPRTase family.

The protein resides in the cytoplasm. Its subcellular location is the nucleus. The sequence is that of Uracil phosphoribosyltransferase homolog (UPRT) from Macaca fascicularis (Crab-eating macaque).